The primary structure comprises 687 residues: Epithelial splicing regulatory protein 1 (687 aa).

3 RRM domains span residues Thr-226–Gly-303, Val-327–Ala-407, and Asp-446–Ala-526.

Belongs to the ESRP family.

The protein localises to the nucleus. In terms of biological role, mRNA splicing factor that regulates the formation of epithelial cell-specific isoforms. Specifically regulates the expression of FGFR2-IIIb, an epithelial cell-specific isoform of fgfr2. Acts by directly binding specific sequences in mRNAs. Binds the GU-rich sequence motifs in the ISE/ISS-3, a cis-element regulatory region present in the mRNA of fgfr2. The sequence is that of Epithelial splicing regulatory protein 1 (esrp1) from Xenopus tropicalis (Western clawed frog).